The sequence spans 124 residues: MARLAGVDIPREKRLEIALTYIYGVGKTRAHETLAATGISADVRVKDLTDAQLVELRDYIEGNYKVEGDLRREVAADIRRKVEIGSYEGLRHRKGLPVRGQRTKTNARTRKGPKRTVAGKKKAR.

Residues 94–124 (KGLPVRGQRTKTNARTRKGPKRTVAGKKKAR) are disordered.

The protein belongs to the universal ribosomal protein uS13 family. In terms of assembly, part of the 30S ribosomal subunit. Forms a loose heterodimer with protein S19. Forms two bridges to the 50S subunit in the 70S ribosome.

In terms of biological role, located at the top of the head of the 30S subunit, it contacts several helices of the 16S rRNA. In the 70S ribosome it contacts the 23S rRNA (bridge B1a) and protein L5 of the 50S subunit (bridge B1b), connecting the 2 subunits; these bridges are implicated in subunit movement. Contacts the tRNAs in the A and P-sites. This Pseudarthrobacter chlorophenolicus (strain ATCC 700700 / DSM 12829 / CIP 107037 / JCM 12360 / KCTC 9906 / NCIMB 13794 / A6) (Arthrobacter chlorophenolicus) protein is Small ribosomal subunit protein uS13.